Here is a 266-residue protein sequence, read N- to C-terminus: ES1 protein homolog, mitochondrial (266 aa).

The transit peptide at 1-39 (MAAVRVLVSPRLASALLPLSGRHRTTSQRAAIHSSAPRP) directs the protein to the mitochondrion. N6-acetyllysine is present on residues lysine 149, lysine 155, and lysine 162. Residue lysine 201 is modified to N6-acetyllysine; alternate. The residue at position 201 (lysine 201) is an N6-succinyllysine; alternate. Lysine 217 is subject to N6-acetyllysine. Lysine 221 and lysine 231 each carry N6-acetyllysine; alternate. N6-succinyllysine; alternate is present on residues lysine 221 and lysine 231.

This sequence belongs to the ES1 family.

It is found in the mitochondrion. This Rattus norvegicus (Rat) protein is ES1 protein homolog, mitochondrial.